Consider the following 557-residue polypeptide: Potassium-transporting ATPase potassium-binding subunit (557 aa).

Helical transmembrane passes span 5 to 25 (GFLL…PLGS), 63 to 83 (LCAI…MLLG), 132 to 152 (GLTV…FAFI), 170 to 190 (LLRI…LFFI), 253 to 273 (FVQM…FGEV), 283 to 303 (LLWA…WAEV), 329 to 349 (VLVS…AVIA), 356 to 376 (ALGG…FGGV), 379 to 399 (GLYG…LMIG), 416 to 436 (LTAL…ALAM), 484 to 504 (LLAF…MAIA), and 526 to 546 (LFVG…FIPA).

It belongs to the KdpA family. As to quaternary structure, the system is composed of three essential subunits: KdpA, KdpB and KdpC.

It localises to the cell inner membrane. Its function is as follows. Part of the high-affinity ATP-driven potassium transport (or Kdp) system, which catalyzes the hydrolysis of ATP coupled with the electrogenic transport of potassium into the cytoplasm. This subunit binds the periplasmic potassium ions and delivers the ions to the membrane domain of KdpB through an intramembrane tunnel. This chain is Potassium-transporting ATPase potassium-binding subunit, found in Shigella boydii serotype 4 (strain Sb227).